A 494-amino-acid polypeptide reads, in one-letter code: Putative NAD kinase 3 (494 aa).

The protein belongs to the NAD kinase family.

The catalysed reaction is NAD(+) + ATP = ADP + NADP(+) + H(+). The protein is Putative NAD kinase 3 of Oryza sativa subsp. japonica (Rice).